Reading from the N-terminus, the 135-residue chain is Holo-[acyl-carrier-protein] synthase (135 aa).

Residues Asp8 and Glu57 each contribute to the Mg(2+) site.

Belongs to the P-Pant transferase superfamily. AcpS family. Mg(2+) is required as a cofactor.

The protein resides in the cytoplasm. The catalysed reaction is apo-[ACP] + CoA = holo-[ACP] + adenosine 3',5'-bisphosphate + H(+). Transfers the 4'-phosphopantetheine moiety from coenzyme A to a Ser of acyl-carrier-protein. This is Holo-[acyl-carrier-protein] synthase from Methylobacterium sp. (strain 4-46).